Reading from the N-terminus, the 180-residue chain is Bifunctional protein PyrR (180 aa).

Substrate-binding positions include 39 to 40 (TR), 103 to 111 (DDVLYTGRT), and Arg-136. The PRPP-binding signature appears at 99–111 (VILIDDVLYTGRT).

The protein belongs to the purine/pyrimidine phosphoribosyltransferase family. PyrR subfamily. Homodimer and homohexamer; in equilibrium.

The catalysed reaction is UMP + diphosphate = 5-phospho-alpha-D-ribose 1-diphosphate + uracil. In terms of biological role, regulates transcriptional attenuation of the pyrimidine nucleotide (pyr) operon by binding in a uridine-dependent manner to specific sites on pyr mRNA. This disrupts an antiterminator hairpin in the RNA and favors formation of a downstream transcription terminator, leading to a reduced expression of downstream genes. Its function is as follows. Also displays a weak uracil phosphoribosyltransferase activity which is not physiologically significant. The chain is Bifunctional protein PyrR from Halalkalibacterium halodurans (strain ATCC BAA-125 / DSM 18197 / FERM 7344 / JCM 9153 / C-125) (Bacillus halodurans).